The chain runs to 304 residues: Uricase (304 aa).

Alanine 2 is modified (N-acetylalanine). N6-acetyllysine; alternate is present on residues lysine 10 and lysine 23. N6-succinyllysine; alternate occurs at positions 10 and 23. Residue lysine 23 is the Charge relay system of the active site. N6-acetyllysine is present on residues lysine 27 and lysine 36. Residues serine 39 and serine 63 each carry the phosphoserine modification. Residue threonine 68 is the Charge relay system of the active site. Residues threonine 68 and aspartate 69 each contribute to the urate site. 3 positions are modified to N6-acetyllysine: lysine 118, lysine 122, and lysine 164. Phenylalanine 170 contributes to the urate binding site. An N6-acetyllysine mark is found at lysine 175 and lysine 185. Arginine 187 lines the urate pocket. Residues lysine 221 and lysine 228 each carry the N6-acetyllysine; alternate modification. Residues lysine 221 and lysine 228 each carry the N6-succinyllysine; alternate modification. Serine 232 carries the phosphoserine modification. Residues valine 235, glutamine 236, and asparagine 262 each coordinate urate. Residue histidine 264 is the Charge relay system of the active site. Lysine 278 bears the N6-acetyllysine mark. Residue tyrosine 289 is modified to Phosphotyrosine. A Microbody targeting signal motif is present at residues 302–304 (SKL).

It belongs to the uricase family.

It is found in the peroxisome. The enzyme catalyses urate + O2 + H2O = 5-hydroxyisourate + H2O2. Its pathway is purine metabolism; urate degradation; (S)-allantoin from urate: step 1/3. Catalyzes the oxidation of uric acid to 5-hydroxyisourate, which is further processed to form (S)-allantoin. The chain is Uricase (UOX) from Canis lupus familiaris (Dog).